The primary structure comprises 358 residues: Dual-specificity RNA methyltransferase RlmN (358 aa).

Glu-91 serves as the catalytic Proton acceptor. The region spanning Gly-102–Asp-337 is the Radical SAM core domain. Cys-109 and Cys-342 are joined by a disulfide. Residues Cys-116, Cys-120, and Cys-123 each coordinate [4Fe-4S] cluster. S-adenosyl-L-methionine contacts are provided by residues Gly-169–Glu-170, Ser-201, Ser-223–His-225, and Asn-299. The S-methylcysteine intermediate role is filled by Cys-342.

Belongs to the radical SAM superfamily. RlmN family. [4Fe-4S] cluster is required as a cofactor.

The protein localises to the cytoplasm. The catalysed reaction is adenosine(2503) in 23S rRNA + 2 reduced [2Fe-2S]-[ferredoxin] + 2 S-adenosyl-L-methionine = 2-methyladenosine(2503) in 23S rRNA + 5'-deoxyadenosine + L-methionine + 2 oxidized [2Fe-2S]-[ferredoxin] + S-adenosyl-L-homocysteine. It carries out the reaction adenosine(37) in tRNA + 2 reduced [2Fe-2S]-[ferredoxin] + 2 S-adenosyl-L-methionine = 2-methyladenosine(37) in tRNA + 5'-deoxyadenosine + L-methionine + 2 oxidized [2Fe-2S]-[ferredoxin] + S-adenosyl-L-homocysteine. Functionally, specifically methylates position 2 of adenine 2503 in 23S rRNA and position 2 of adenine 37 in tRNAs. m2A2503 modification seems to play a crucial role in the proofreading step occurring at the peptidyl transferase center and thus would serve to optimize ribosomal fidelity. This chain is Dual-specificity RNA methyltransferase RlmN, found in Lawsonia intracellularis (strain PHE/MN1-00).